A 551-amino-acid polypeptide reads, in one-letter code: Interleukin-2 receptor subunit beta (551 aa).

Positions 1-26 are cleaved as a signal peptide; sequence MAAPALSWRLPLLILLLPLATSWASA. At 27–240 the chain is on the extracellular side; it reads AVNGTSQFTC…TKPAALGKDT (214 aa). Residues N29, N43, and N71 are each glycosylated (N-linked (GlcNAc...) asparagine). 3 cysteine pairs are disulfide-bonded: C36-C46, C59-C110, and C74-C86. Residues 134–234 form the Fibronectin type-III domain; the sequence is APISLQVVHV…QPLAFRTKPA (101 aa). Residue N149 is glycosylated (N-linked (GlcNAc...) asparagine). The WSXWS motif signature appears at 220 to 224; the sequence is WSPWS. A helical transmembrane segment spans residues 241-265; that stretch reads IPWLGHLLVGLSGAFGFIILVYLLI. Residues 266-551 are Cytoplasmic-facing; the sequence is NCRNTGPWLK…LQGQDPTHLV (286 aa). The Box 1 motif motif lies at 278 to 286; it reads LKCNTPDPS. Disordered regions lie at residues 389–416 and 432–486; these read EEDP…GEDD and PSLL…VDFQ.

This sequence belongs to the type I cytokine receptor family. Type 4 subfamily. As to quaternary structure, non-covalent dimer of an alpha and a beta subunit. IL2R exists in 3 different forms: a high affinity dimer, an intermediate affinity monomer (beta subunit), and a low affinity monomer (alpha subunit). The high and intermediate affinity forms also associate with a gamma subunit. Interacts with SHB upon interleukin stimulation. (Microbial infection) Interacts with HTLV-1 accessory protein p12I.

Its subcellular location is the cell membrane. In terms of biological role, receptor for interleukin-2. This beta subunit is involved in receptor mediated endocytosis and transduces the mitogenic signals of IL2. Probably in association with IL15RA, involved in the stimulation of neutrophil phagocytosis by IL15. In Homo sapiens (Human), this protein is Interleukin-2 receptor subunit beta.